The chain runs to 281 residues: Probable endonuclease 4 (281 aa).

9 residues coordinate Zn(2+): histidine 78, histidine 118, glutamate 149, aspartate 181, histidine 184, histidine 216, aspartate 229, histidine 231, and glutamate 260.

This sequence belongs to the AP endonuclease 2 family. Requires Zn(2+) as cofactor.

It carries out the reaction Endonucleolytic cleavage to 5'-phosphooligonucleotide end-products.. Endonuclease IV plays a role in DNA repair. It cleaves phosphodiester bonds at apurinic or apyrimidinic (AP) sites, generating a 3'-hydroxyl group and a 5'-terminal sugar phosphate. This is Probable endonuclease 4 from Thermoplasma acidophilum (strain ATCC 25905 / DSM 1728 / JCM 9062 / NBRC 15155 / AMRC-C165).